Here is a 612-residue protein sequence, read N- to C-terminus: MNKFCLLPFHGKRIGVANIPFTILFKKGPCFLHSHITAVYYSTKGKNDSHEQSRVSKKSTFTPLETPWYLRIVDNEKELMEGKKNNHHTMNKELEIPKTSPNSLRKIADLLTGKLGLDDFLVFDLRKKSPNSVSAVNKLGDFMVICTARSTKHCHKSFLELNKFLKHEFCSSAYVEGNFNERQESRRKRRLARKSNLSKLLGRSSECSAKDLNSEAWYMIDCRVDGIFVNILTQRRRNELNLEELYAPENEKSKFQNIDSGNVPTISGVNEISSNNNILLGLRRLAQQRRRYSTINPNGLSNLRYFLQKEDFKGANKIIQSSSGTETHNIRTLEHVKNTLKDLVGQERKVDVVQWKSLFDEHSTFLTINQPAAYWPLRLEYAILLNKADPQFYSDRVFLKDYLLLKKSLGQELIREDLIALLEMVLKTQHSSHSYFNLVKQNRVIIRALNLFKGLQTEDDGSVVYDEEVISLLLNSMVADERVKLRSLYETIDHIFQTFGDKLTSGMIVSILQNLAKIKDWNKLLQVWEAITPTEGEGQDKRPWNEFINVINQSGDSHVISKIVNNGHLLWIRRLNVNVTPELCNSIKALLKTAGMENSTLEEFLVRGTNNQ.

Residues 1–14 (MNKFCLLPFHGKRI) constitute a mitochondrion transit peptide.

This sequence belongs to the ATP25 family.

The protein resides in the mitochondrion inner membrane. Functionally, mRNA stabilization factor specific for the 0.95 kb OLI1 mRNA. Also involved in OLI1 ring formation. This chain is ATPase synthesis protein 25, mitochondrial (ATP25), found in Saccharomyces cerevisiae (strain AWRI1631) (Baker's yeast).